A 59-amino-acid polypeptide reads, in one-letter code: Photosystem II reaction center protein K (59 aa).

Positions 1-22 are excised as a propeptide; it reads MLNIFSLICLNSALYSSSFFFG. The chain crosses the membrane as a helical span at residues 30–50; it reads FLSPIVDFMPVIPLFFFLLAF.

As to quaternary structure, PSII is composed of 1 copy each of membrane proteins PsbA, PsbB, PsbC, PsbD, PsbE, PsbF, PsbH, PsbI, PsbJ, PsbK, PsbL, PsbM, PsbT, PsbX, PsbY, PsbZ, Psb30/Ycf12, at least 3 peripheral proteins of the oxygen-evolving complex and a large number of cofactors. It forms dimeric complexes. This protein, PsbL and plastoquinone-9 are found in PSII dimers but not seen in PSII monomers.

Its subcellular location is the plastid. It localises to the chloroplast thylakoid membrane. Functionally, one of the components of the core complex of photosystem II (PSII). PSII is a light-driven water:plastoquinone oxidoreductase that uses light energy to abstract electrons from H(2)O, generating O(2) and a proton gradient subsequently used for ATP formation. It consists of a core antenna complex that captures photons, and an electron transfer chain that converts photonic excitation into a charge separation. May be involved in PSII dimerization. One of the components of the core complex of photosystem II (PSII). PSII is a light-driven water:plastoquinone oxidoreductase that uses light energy to abstract electrons from H(2)O, generating O(2) and a proton gradient subsequently used for ATP formation. It consists of a core antenna complex that captures photons, and an electron transfer chain that converts photonic excitation into a charge separation. In Spinacia oleracea (Spinach), this protein is Photosystem II reaction center protein K.